The chain runs to 367 residues: Alanine racemase (367 aa).

The active-site Proton acceptor; specific for D-alanine is the lysine 40. Lysine 40 is subject to N6-(pyridoxal phosphate)lysine. Arginine 136 is a binding site for substrate. The active-site Proton acceptor; specific for L-alanine is tyrosine 263. Methionine 310 contacts substrate.

It belongs to the alanine racemase family. Requires pyridoxal 5'-phosphate as cofactor.

The catalysed reaction is L-alanine = D-alanine. Its pathway is amino-acid biosynthesis; D-alanine biosynthesis; D-alanine from L-alanine: step 1/1. Catalyzes the interconversion of L-alanine and D-alanine. May also act on other amino acids. This Lactococcus lactis subsp. lactis (strain IL1403) (Streptococcus lactis) protein is Alanine racemase (alr).